A 455-amino-acid chain; its full sequence is Nucleoside-triphosphatase (455 aa).

The active-site Proton acceptor is Glu168.

It belongs to the GDA1/CD39 NTPase family.

Its subcellular location is the nucleus. The catalysed reaction is a ribonucleoside 5'-triphosphate + H2O = a ribonucleoside 5'-diphosphate + phosphate + H(+). Its function is as follows. Might be involved in RNA transport out of nuclei. In Pisum sativum (Garden pea), this protein is Nucleoside-triphosphatase.